A 189-amino-acid polypeptide reads, in one-letter code: GTPase NRas (189 aa).

GTP contacts are provided by residues 10 to 18 and 29 to 30; these read GAGGVGKSA and VD. The short motif at 32-40 is the Effector region element; that stretch reads YDPTIEDSY. 57 to 61 contacts GTP; the sequence is DTAGQ. The residue at position 89 (Ser-89) is a Phosphoserine. 116 to 119 contributes to the GTP binding site; it reads NKCD. Positions 166-185 are hypervariable region; sequence YRMKKLNSSEDGTQGCMGLP. Residue Lys-170 forms a Glycyl lysine isopeptide (Lys-Gly) (interchain with G-Cter in ubiquitin) linkage. The S-palmitoyl cysteine moiety is linked to residue Cys-181. Residue Cys-186 is the site of S-farnesyl cysteine attachment. Positions 187–189 are cleaved as a propeptide — removed in mature form; the sequence is VVM.

Belongs to the small GTPase superfamily. Ras family. Interacts (active GTP-bound form preferentially) with RGS14. Interacts (active GTP-bound form) with RASSF7. Interacts (active GTP-bound form) with both SHOC2 and PP1c (all isoforms) to form a tertiary complex; SHOC2 and PP1c preferably bind M-Ras/MRAS, but they also bind K-Ras/KRAS, N-Ras/NRAS and H-Ras/HRAS. Palmitoylated by the ZDHHC9-GOLGA7 complex. Depalmitoylated by ABHD17A, ABHD17B and ABHD17C. A continuous cycle of de- and re-palmitoylation regulates rapid exchange between plasma membrane and Golgi. In terms of processing, acetylation at Lys-104 prevents interaction with guanine nucleotide exchange factors (GEFs). Post-translationally, ubiquitinated by the BCR(LZTR1) E3 ubiquitin ligase complex at Lys-170 in a non-degradative manner, leading to inhibit Ras signaling by decreasing Ras association with membranes. Phosphorylation at Ser-89 enhances NRAS association with its downstream effectors.

Its subcellular location is the cell membrane. It is found in the golgi apparatus membrane. It carries out the reaction GTP + H2O = GDP + phosphate + H(+). With respect to regulation, alternates between an inactive form bound to GDP and an active form bound to GTP. Activated by a guanine nucleotide-exchange factor (GEF) and inactivated by a GTPase-activating protein (GAP). Functionally, ras proteins bind GDP/GTP and possess intrinsic GTPase activity. This chain is GTPase NRas (Nras), found in Rattus norvegicus (Rat).